The sequence spans 505 residues: Facilitated trehalose transporter Tret1 (505 aa).

The Cytoplasmic portion of the chain corresponds to 1 to 46 (MEMEIKDENLRNSVPFVRQLSTDSVKTKTEYDNEDGTPYKSTTQKL). A helical membrane pass occupies residues 47 to 67 (FLWTQLLAAFAVSVGSMNVGF). The Extracellular segment spans residues 68-91 (SSGYTSPAVLTMNITLDITKEEIT). An N-linked (GlcNAc...) asparagine glycan is attached at asparagine 80. Residues 92–112 (WVGGLMPLAALVGGIVGGPLI) traverse the membrane as a helical segment. Over 113 to 124 (EYLGRKKTIMGT) the chain is Cytoplasmic. The chain crosses the membrane as a helical span at residues 125–145 (AVPFTIGWMLIANAINVVMVF). At 146-149 (AGRV) the chain is on the extracellular side. A helical transmembrane segment spans residues 150–170 (ICGVCVGIVSLAFPVYIGETI). Topologically, residues 171–175 (QPEVR) are cytoplasmic. The chain crosses the membrane as a helical span at residues 176–196 (GALGLLPTAFGNTGILLAFLV). Residues 197–201 (GSYLD) are Extracellular-facing. A helical transmembrane segment spans residues 202 to 222 (WSNLAFFGAAIPVPFFLLMIL). The Cytoplasmic segment spans residues 223-286 (TPETPRWYVS…QLFSKRYLPA (64 aa)). Residues 287–307 (VMISLGLMLFQQLTGINAVIF) traverse the membrane as a helical segment. The Extracellular portion of the chain corresponds to 308 to 323 (YAASIFQMSGSSVDEN). The chain crosses the membrane as a helical span at residues 324–344 (LASIIIGVVNFISTFIATMLI). Residues 345 to 350 (DRLGRK) lie on the Cytoplasmic side of the membrane. A helical transmembrane segment spans residues 351–371 (VLLYISSVAMITTLLALGAYF). Residues 372-390 (YLKQNHIDVTAYGWLPLAC) are Extracellular-facing. The helical transmembrane segment at 391–411 (LVIYVLGFSIGFGPIPWLMLG) threads the bilayer. The Cytoplasmic portion of the chain corresponds to 412-419 (EILPSKIR). The helical transmembrane segment at 420–437 (GTAASLATGFNWTCTFIV) threads the bilayer. The Extracellular portion of the chain corresponds to 438-451 (TKTFQNIIDAIYMH). A helical transmembrane segment spans residues 452 to 472 (GTLWLFAVICIGGLLFVIFFV). The Cytoplasmic portion of the chain corresponds to 473 to 505 (PETKGKSLEEIEMKLTSGSRRVRNISKQPENIC).

It belongs to the major facilitator superfamily. Sugar transporter (TC 2.A.1.1) family. Trehalose transporter subfamily. Expressed in many larval tissues at a low level, moderate levels of expression are seen in testis and head and highest expression in muscle.

The protein resides in the cell membrane. Functionally, high-capacity facilitative transporter for trehalose. Does not transport maltose, sucrose or lactose. Mediates the bidirectional transfer of trehalose. Responsible for the transport of trehalose synthesized in the fat body and the incorporation of trehalose into other tissues that require a carbon source, thereby regulating trehalose levels in the hemolymph. The sequence is that of Facilitated trehalose transporter Tret1 from Bombyx mori (Silk moth).